The chain runs to 218 residues: 3-oxo-tetronate 4-phosphate decarboxylase (218 aa).

The active-site Proton acceptor is the E86. 3 residues coordinate Zn(2+): E86, H105, and H107. Catalysis depends on Y132, which acts as the Proton donor. H172 provides a ligand contact to Zn(2+).

The protein belongs to the aldolase class II family. AraD/FucA subfamily. Zn(2+) is required as a cofactor.

It catalyses the reaction 3-dehydro-4-O-phospho-D-erythronate + H(+) = dihydroxyacetone phosphate + CO2. The enzyme catalyses 3-dehydro-4-O-phospho-L-erythronate + H(+) = dihydroxyacetone phosphate + CO2. Its function is as follows. Catalyzes the decarboxylation of 3-oxo-tetronate 4-phosphate to dihydroxyacetone phosphate (DHAP) and CO(2). This is 3-oxo-tetronate 4-phosphate decarboxylase from Pectobacterium atrosepticum (strain SCRI 1043 / ATCC BAA-672) (Erwinia carotovora subsp. atroseptica).